A 432-amino-acid chain; its full sequence is Cysteine desulfurase, mitosomal (432 aa).

Pyridoxal 5'-phosphate contacts are provided by residues 102–103 (AT), Q212, and 232–234 (CAH). K235 carries the N6-(pyridoxal phosphate)lysine modification. Residue T272 participates in pyridoxal 5'-phosphate binding. C357 acts as the Cysteine persulfide intermediate in catalysis. C357 is a [2Fe-2S] cluster binding site.

The protein belongs to the class-V pyridoxal-phosphate-dependent aminotransferase family. NifS/IscS subfamily. The cofactor is pyridoxal 5'-phosphate.

It is found in the mitosome. It carries out the reaction (sulfur carrier)-H + L-cysteine = (sulfur carrier)-SH + L-alanine. Catalyzes the removal of elemental sulfur from cysteine to produce alanine. It supplies the inorganic sulfur for iron-sulfur (Fe-S) clusters in mitosomes. The protein is Cysteine desulfurase, mitosomal of Encephalitozoon cuniculi (strain GB-M1) (Microsporidian parasite).